The sequence spans 267 residues: Pyridoxine 5'-phosphate synthase (267 aa).

N8 serves as a coordination point for 3-amino-2-oxopropyl phosphate. Position 10 to 11 (10 to 11 (DH)) interacts with 1-deoxy-D-xylulose 5-phosphate. Position 19 (R19) interacts with 3-amino-2-oxopropyl phosphate. H44 functions as the Proton acceptor in the catalytic mechanism. 2 residues coordinate 1-deoxy-D-xylulose 5-phosphate: R46 and H51. E71 (proton acceptor) is an active-site residue. T101 provides a ligand contact to 1-deoxy-D-xylulose 5-phosphate. Residue H219 is the Proton donor of the active site. Residues G220 and 241–242 (GH) contribute to the 3-amino-2-oxopropyl phosphate site.

It belongs to the PNP synthase family. In terms of assembly, homooctamer; tetramer of dimers.

Its subcellular location is the cytoplasm. It carries out the reaction 3-amino-2-oxopropyl phosphate + 1-deoxy-D-xylulose 5-phosphate = pyridoxine 5'-phosphate + phosphate + 2 H2O + H(+). Its pathway is cofactor biosynthesis; pyridoxine 5'-phosphate biosynthesis; pyridoxine 5'-phosphate from D-erythrose 4-phosphate: step 5/5. In terms of biological role, catalyzes the complicated ring closure reaction between the two acyclic compounds 1-deoxy-D-xylulose-5-phosphate (DXP) and 3-amino-2-oxopropyl phosphate (1-amino-acetone-3-phosphate or AAP) to form pyridoxine 5'-phosphate (PNP) and inorganic phosphate. The protein is Pyridoxine 5'-phosphate synthase of Helicobacter hepaticus (strain ATCC 51449 / 3B1).